The chain runs to 700 residues: Elongation factor G (700 aa).

Residues 10–286 (TKVRNIGIMA…AVIDYLPNPL (277 aa)) enclose the tr-type G domain. GTP is bound by residues 19 to 26 (AHIDAGKT), 83 to 87 (DTPGH), and 137 to 140 (NKMD).

Belongs to the TRAFAC class translation factor GTPase superfamily. Classic translation factor GTPase family. EF-G/EF-2 subfamily.

Its subcellular location is the cytoplasm. In terms of biological role, catalyzes the GTP-dependent ribosomal translocation step during translation elongation. During this step, the ribosome changes from the pre-translocational (PRE) to the post-translocational (POST) state as the newly formed A-site-bound peptidyl-tRNA and P-site-bound deacylated tRNA move to the P and E sites, respectively. Catalyzes the coordinated movement of the two tRNA molecules, the mRNA and conformational changes in the ribosome. The chain is Elongation factor G from Mycolicibacterium vanbaalenii (strain DSM 7251 / JCM 13017 / BCRC 16820 / KCTC 9966 / NRRL B-24157 / PYR-1) (Mycobacterium vanbaalenii).